Reading from the N-terminus, the 381-residue chain is Creatine kinase B-type (381 aa).

Phosphoserine is present on serine 4. One can recognise a Phosphagen kinase N-terminal domain in the interval 11–98 (KLRFPAEDEF…FDPIIEDRHG (88 aa)). At threonine 35 the chain carries Phosphothreonine. Residue lysine 45 forms a Glycyl lysine isopeptide (Lys-Gly) (interchain with G-Cter in ubiquitin) linkage. Valine 72 lines the creatine pocket. Positions 96–110 (RHGGYQPSDEHKTDL) are enriched in basic and acidic residues. The interval 96-122 (RHGGYQPSDEHKTDLNPDNLQGGDDLD) is disordered. Lysine 107 is covalently cross-linked (Glycyl lysine isopeptide (Lys-Gly) (interchain with G-Cter in ubiquitin)). Phosphotyrosine is present on tyrosine 125. The 243-residue stretch at 125-367 (YVLSSRVRTG…KLLIEMEQRL (243 aa)) folds into the Phosphagen kinase C-terminal domain. Residues 128–132 (SSRVR), arginine 130, arginine 132, and histidine 191 contribute to the ATP site. Residues 130 to 138 (RVRTGRSIR) are internal MTS-like signal. A Phosphoserine modification is found at serine 199. Glutamate 232 serves as a coordination point for creatine. Arginine 236 provides a ligand contact to ATP. Position 269 is a 3'-nitrotyrosine (tyrosine 269). Serine 285 serves as a coordination point for creatine. An ATP-binding site is contributed by arginine 292. Phosphoserine is present on serine 309. ATP-binding positions include arginine 320, 320 to 325 (RGTGGV), and aspartate 335. Threonine 322 bears the Phosphothreonine mark. A Glycyl lysine isopeptide (Lys-Gly) (interchain with G-Cter in ubiquitin) cross-link involves residue lysine 381.

It belongs to the ATP:guanido phosphotransferase family. In terms of assembly, dimer of identical or non-identical chains, which can be either B (brain type) or M (muscle type). With MM being the major form in skeletal muscle and myocardium, MB existing in myocardium, and BB existing in many tissues, especially brain. Interacts with SLC12A6 (via C-terminus); the interaction may be required for SLC12A6 potassium-chloride cotransport activity. Ubiquitinated by the ECS(ASB9) complex, leading to its degradation by the proteasome. In terms of tissue distribution, in the kidney localized primarily in the outer medulla in the thick ascending limb and distal convoluted tubule.

Its subcellular location is the cytoplasm. The protein resides in the cytosol. It localises to the mitochondrion. It is found in the cell membrane. The catalysed reaction is creatine + ATP = N-phosphocreatine + ADP + H(+). In terms of biological role, reversibly catalyzes the transfer of phosphate between ATP and various phosphogens (e.g. creatine phosphate). Creatine kinase isoenzymes play a central role in energy transduction in tissues with large, fluctuating energy demands, such as skeletal muscle, heart, brain and spermatozoa. Acts as a key regulator of adaptive thermogenesis as part of the futile creatine cycle: localizes to the mitochondria of thermogenic fat cells and acts by mediating phosphorylation of creatine to initiate a futile cycle of creatine phosphorylation and dephosphorylation. During the futile creatine cycle, creatine and N-phosphocreatine are in a futile cycle, which dissipates the high energy charge of N-phosphocreatine as heat without performing any mechanical or chemical work. The chain is Creatine kinase B-type (Ckb) from Rattus norvegicus (Rat).